The primary structure comprises 357 residues: Phenylalanine--tRNA ligase alpha subunit (357 aa).

Mg(2+) is bound at residue Glu257.

Belongs to the class-II aminoacyl-tRNA synthetase family. Phe-tRNA synthetase alpha subunit type 1 subfamily. In terms of assembly, tetramer of two alpha and two beta subunits. Mg(2+) is required as a cofactor.

The protein localises to the cytoplasm. The enzyme catalyses tRNA(Phe) + L-phenylalanine + ATP = L-phenylalanyl-tRNA(Phe) + AMP + diphosphate + H(+). In Roseobacter denitrificans (strain ATCC 33942 / OCh 114) (Erythrobacter sp. (strain OCh 114)), this protein is Phenylalanine--tRNA ligase alpha subunit.